The chain runs to 228 residues: UPF0758 protein str1465 (228 aa).

The 123-residue stretch at 103–225 (QIMSSQQVAR…YYSFREERED (123 aa)) folds into the MPN domain. Zn(2+)-binding residues include His-174, His-176, and Asp-187. The short motif at 174–187 (HNHPSGEAYPSRND) is the JAMM motif element.

It belongs to the UPF0758 family.

This is UPF0758 protein str1465 from Streptococcus thermophilus (strain CNRZ 1066).